The chain runs to 248 residues: ATP synthase subunit a (248 aa).

The next 6 membrane-spanning stretches (helical) occupy residues 34–54, 91–111, 121–141, 147–167, 196–216, and 220–240; these read TNAT…LVFG, YFPY…LGLL, IAVT…LGFV, FLGL…LAVI, VFAA…AITA, and LEVL…CVYL.

It belongs to the ATPase A chain family. In terms of assembly, F-type ATPases have 2 components, CF(1) - the catalytic core - and CF(0) - the membrane proton channel. CF(1) has five subunits: alpha(3), beta(3), gamma(1), delta(1), epsilon(1). CF(0) has three main subunits: a(1), b(2) and c(9-12). The alpha and beta chains form an alternating ring which encloses part of the gamma chain. CF(1) is attached to CF(0) by a central stalk formed by the gamma and epsilon chains, while a peripheral stalk is formed by the delta and b chains.

The protein resides in the cell inner membrane. Its function is as follows. Key component of the proton channel; it plays a direct role in the translocation of protons across the membrane. This chain is ATP synthase subunit a, found in Paracoccus denitrificans (strain Pd 1222).